The primary structure comprises 269 residues: UPF0162 protein BU173 (269 aa).

It belongs to the UPF0162 family.

The sequence is that of UPF0162 protein BU173 from Buchnera aphidicola subsp. Acyrthosiphon pisum (strain APS) (Acyrthosiphon pisum symbiotic bacterium).